The following is a 189-amino-acid chain: Elongation factor P-like protein (189 aa).

Belongs to the elongation factor P family.

The protein is Elongation factor P-like protein of Vibrio atlanticus (strain LGP32) (Vibrio splendidus (strain Mel32)).